The following is a 651-amino-acid chain: BTB/POZ domain-containing protein At3g44820 (651 aa).

Residues serine 25–serine 96 enclose the BTB domain. The NPH3 domain maps to aspartate 211–histidine 509. Positions aspartate 611–glycine 651 are disordered. Over residues aspartate 615 to serine 627 the composition is skewed to polar residues. The segment covering serine 637 to glycine 651 has biased composition (basic residues).

Belongs to the NPH3 family.

Its pathway is protein modification; protein ubiquitination. In terms of biological role, may act as a substrate-specific adapter of an E3 ubiquitin-protein ligase complex (CUL3-RBX1-BTB) which mediates the ubiquitination and subsequent proteasomal degradation of target proteins. The protein is BTB/POZ domain-containing protein At3g44820 of Arabidopsis thaliana (Mouse-ear cress).